Here is a 187-residue protein sequence, read N- to C-terminus: Probable chorismate pyruvate-lyase (187 aa).

Residues Arg-80, Leu-117, and Glu-176 each contribute to the substrate site.

This sequence belongs to the UbiC family.

The protein resides in the cytoplasm. It catalyses the reaction chorismate = 4-hydroxybenzoate + pyruvate. It participates in cofactor biosynthesis; ubiquinone biosynthesis. In terms of biological role, removes the pyruvyl group from chorismate, with concomitant aromatization of the ring, to provide 4-hydroxybenzoate (4HB) for the ubiquinone pathway. The protein is Probable chorismate pyruvate-lyase of Halorhodospira halophila (strain DSM 244 / SL1) (Ectothiorhodospira halophila (strain DSM 244 / SL1)).